The primary structure comprises 392 residues: Proteasomal ATPase-associated factor 1 (392 aa).

An N-acetylalanine modification is found at Ala2. WD repeat units follow at residues 90-129 (IHTK…LRRV), 132-171 (GHVF…CVVT), 174-215 (GHKG…GVIA), 278-316 (IGSD…TPVQ), and 360-392 (ADCD…LSDL).

It belongs to the WD repeat PAAF1/RPN14 family. In terms of assembly, interacts with PSMC1, PSMC2, PSMC3, PSMC4, PSMC5 and PSMC6. Interacts with SUPT6H.

Its function is as follows. Inhibits proteasome 26S assembly and activity by impairing the association of the 19S regulatory complex with the 20S core. Protects SUPT6H from proteasomal degradation. This is Proteasomal ATPase-associated factor 1 (PAAF1) from Bos taurus (Bovine).